Here is a 283-residue protein sequence, read N- to C-terminus: Protein MGARP (283 aa).

The disordered stretch occupies residues 1–36 (MYLRRAVSKTLALPRRAPPGPAPLGKDASLRRMSSR). At 1–41 (MYLRRAVSKTLALPRRAPPGPAPLGKDASLRRMSSRKFPGT) the chain is on the cytoplasmic side. A helical; Anchor for type IV membrane protein membrane pass occupies residues 42 to 64 (SGSNMIYYLVVGVTVSAGGYYTY). The Mitochondrial intermembrane segment spans residues 65–283 (KALTSKQVRR…VTEETASPQG (219 aa)). 2 disordered regions span residues 78–101 (VAEPKEQTKAELQPLPGEKEEHVA) and 118–283 (AESV…SPQG). A compositionally biased stretch (low complexity) spans 128–160 (EAAVVLPEESQASAPSEVPAEAAVVEASLSSSE). Composition is skewed to polar residues over residues 171-184 (VETTESVPESTQEV) and 199-220 (ADTSQEGADTSQEGADTSQEGA). Residues 221–245 (DTTKEEADNSKEAEGTTTEDPRSIS) are compositionally biased toward basic and acidic residues.

Interacts with RHOT1/Miro-1, RHOT2/Miro-2, TRAK1/OIP106 and TRAK2/GRIF1. Expressed in the ovary, testis, brain, adrenal glands and the compartments of the visual nervous system. Expressed in corneal endothelium (CE) (at protein level). Expressed in steroidogenic tissues with the highest level of expression observed in the adrenal gland. Weakly expressed in placenta. Weakly expressed in astrocytes and neurons under normoxia. Strongly expressed in astrocytes and neurons under hypoxia. Expressed in each layer of the retina, with particularly higher staining in the inner segment of the photoreceptor (IS), the outer plexiform layer (OPL) and the ganglion cell layer (GCL).

The protein resides in the mitochondrion. It is found in the mitochondrion outer membrane. The protein localises to the mitochondrion inner membrane. In terms of biological role, plays a role in the trafficking of mitochondria along microtubules. Regulates the kinesin-mediated axonal transport of mitochondria to nerve terminals along microtubules during hypoxia. Participates in the translocation of TRAK2/GRIF1 from the cytoplasm to the mitochondrion. Also plays a role in steroidogenesis through maintenance of mitochondrial abundance and morphology. Plays an inhibitory role during neocortex development by regulating mitochondrial morphology, distribution and motility in neocortical neurons. The chain is Protein MGARP (Mgarp) from Mus musculus (Mouse).